A 487-amino-acid polypeptide reads, in one-letter code: Protein FAM221B (487 aa).

Polar residues-rich tracts occupy residues 1 to 13 (MEAN…PQDT) and 36 to 48 (HETP…SQKH). 2 disordered regions span residues 1–103 (MEAN…QSVT) and 132–289 (QLSP…VTSR). The segment covering 81–103 (PPVKSSSSGLLSLPPQLSPQSVT) has biased composition (low complexity). 2 stretches are compositionally biased toward basic and acidic residues: residues 227–236 (ESEHFPKHSF) and 243–253 (AKEDESTKEGE). Serine 248 carries the post-translational modification Phosphoserine.

This sequence belongs to the FAM221 family.

The polypeptide is Protein FAM221B (Fam221b) (Mus musculus (Mouse)).